Here is a 536-residue protein sequence, read N- to C-terminus: 2,3-bisphosphoglycerate-independent phosphoglycerate mutase (536 aa).

Positions 19 and 69 each coordinate Mn(2+). S69 functions as the Phosphoserine intermediate in the catalytic mechanism. Substrate-binding positions include H130, 160–161, R192, R198, 262–265, and K335; these read RD and RPDR. Mn(2+) is bound by residues D402, H406, D443, H444, and H461.

Belongs to the BPG-independent phosphoglycerate mutase family. As to quaternary structure, monomer. It depends on Mn(2+) as a cofactor.

The catalysed reaction is (2R)-2-phosphoglycerate = (2R)-3-phosphoglycerate. It participates in carbohydrate degradation; glycolysis; pyruvate from D-glyceraldehyde 3-phosphate: step 3/5. Its function is as follows. Catalyzes the interconversion of 2-phosphoglycerate and 3-phosphoglycerate. This is 2,3-bisphosphoglycerate-independent phosphoglycerate mutase from Gloeobacter violaceus (strain ATCC 29082 / PCC 7421).